Reading from the N-terminus, the 401-residue chain is Argininosuccinate synthase (401 aa).

An ATP-binding site is contributed by 8–16 (AYSGGLDTS). Tyrosine 85 provides a ligand contact to L-citrulline. Glycine 115 contacts ATP. L-aspartate-binding residues include threonine 117, asparagine 121, and aspartate 122. Asparagine 121 serves as a coordination point for L-citrulline. The L-citrulline site is built by arginine 125, serine 173, glutamate 258, and tyrosine 270.

This sequence belongs to the argininosuccinate synthase family. Type 1 subfamily. Homotetramer.

Its subcellular location is the cytoplasm. It carries out the reaction L-citrulline + L-aspartate + ATP = 2-(N(omega)-L-arginino)succinate + AMP + diphosphate + H(+). The protein operates within amino-acid biosynthesis; L-arginine biosynthesis; L-arginine from L-ornithine and carbamoyl phosphate: step 2/3. This chain is Argininosuccinate synthase, found in Staphylococcus aureus (strain MRSA252).